A 238-amino-acid chain; its full sequence is Large ribosomal subunit protein uL2 (238 aa).

The disordered stretch occupies residues Ala197 to Trp219.

Belongs to the universal ribosomal protein uL2 family. In terms of assembly, part of the 50S ribosomal subunit. Forms a bridge to the 30S subunit in the 70S ribosome.

One of the primary rRNA binding proteins. Required for association of the 30S and 50S subunits to form the 70S ribosome, for tRNA binding and peptide bond formation. It has been suggested to have peptidyltransferase activity; this is somewhat controversial. Makes several contacts with the 16S rRNA in the 70S ribosome. This Nanoarchaeum equitans (strain Kin4-M) protein is Large ribosomal subunit protein uL2.